The sequence spans 348 residues: dTDP-glucose 4,6-dehydratase (348 aa).

Residues 15–16 (FI), 37–40 (DKLT), 62–63 (DI), and 82–86 (YAAES) each bind NAD(+). 2 residues coordinate substrate: Ser-86 and Asn-88. Thr-101 is a binding site for NAD(+). Position 125 (Thr-125) interacts with substrate. Catalysis depends on Asp-126, which acts as the Proton donor. Residues Glu-127 and Tyr-161 each act as proton acceptor in the active site. NAD(+) is bound at residue 161–165 (YSSTK). Asn-190 contributes to the substrate binding site. Asn-191 contacts NAD(+). Substrate is bound by residues 200 to 205 (KFIPRQ), 216 to 218 (KLY), Arg-225, Asn-260, and 283 to 287 (DRAGH).

Belongs to the NAD(P)-dependent epimerase/dehydratase family. dTDP-glucose dehydratase subfamily. Homodimer. NAD(+) is required as a cofactor.

It carries out the reaction dTDP-alpha-D-glucose = dTDP-4-dehydro-6-deoxy-alpha-D-glucose + H2O. It participates in carbohydrate biosynthesis; dTDP-L-rhamnose biosynthesis. In terms of biological role, catalyzes the dehydration of dTDP-D-glucose to form dTDP-6-deoxy-D-xylo-4-hexulose via a three-step process involving oxidation, dehydration and reduction. This is dTDP-glucose 4,6-dehydratase (rmlB) from Streptococcus mutans serotype c (strain ATCC 700610 / UA159).